We begin with the raw amino-acid sequence, 321 residues long: Lipoyl synthase (321 aa).

Cysteine 60, cysteine 65, cysteine 71, cysteine 86, cysteine 90, cysteine 93, and serine 299 together coordinate [4Fe-4S] cluster. One can recognise a Radical SAM core domain in the interval 72-288 (WEKKHATFMI…ETIGRTKGFL (217 aa)).

The protein belongs to the radical SAM superfamily. Lipoyl synthase family. [4Fe-4S] cluster is required as a cofactor.

The protein localises to the cytoplasm. The enzyme catalyses [[Fe-S] cluster scaffold protein carrying a second [4Fe-4S](2+) cluster] + N(6)-octanoyl-L-lysyl-[protein] + 2 oxidized [2Fe-2S]-[ferredoxin] + 2 S-adenosyl-L-methionine + 4 H(+) = [[Fe-S] cluster scaffold protein] + N(6)-[(R)-dihydrolipoyl]-L-lysyl-[protein] + 4 Fe(3+) + 2 hydrogen sulfide + 2 5'-deoxyadenosine + 2 L-methionine + 2 reduced [2Fe-2S]-[ferredoxin]. The protein operates within protein modification; protein lipoylation via endogenous pathway; protein N(6)-(lipoyl)lysine from octanoyl-[acyl-carrier-protein]: step 2/2. Functionally, catalyzes the radical-mediated insertion of two sulfur atoms into the C-6 and C-8 positions of the octanoyl moiety bound to the lipoyl domains of lipoate-dependent enzymes, thereby converting the octanoylated domains into lipoylated derivatives. The polypeptide is Lipoyl synthase (Brucella anthropi (strain ATCC 49188 / DSM 6882 / CCUG 24695 / JCM 21032 / LMG 3331 / NBRC 15819 / NCTC 12168 / Alc 37) (Ochrobactrum anthropi)).